We begin with the raw amino-acid sequence, 104 residues long: V-type ATP synthase subunit F (104 aa).

It belongs to the V-ATPase F subunit family.

Its function is as follows. Produces ATP from ADP in the presence of a proton gradient across the membrane. The chain is V-type ATP synthase subunit F from Thermus thermophilus (strain ATCC BAA-163 / DSM 7039 / HB27).